The following is a 633-amino-acid chain: MATREWFVMNAQQTKLALESPPLFAVKKDDDKDHTCDTGEEPYALVGSPVFNPLEDYKREVVSIIDEYFSSGDVEVAASDLMDLGLSEYHPYFVKRLVSMAMDRGNKEKEKASVLLSRLYALVVSPDQIRVGFIRLLESVGDLALDIPDAVNVLALFIARAIVDEILPPVFLARAKKTLPHSSQGFQVILVSENSYLSAPHHAELVETKWGGSTHITVEETKRKISEFLNEYVENGDTREACRCIRELGVSFFHHEIVKSGLVLVMESRTSEPLILKLLKEATEEGLISSSQMAKGFSRVADSLDDLSLDIPSAKTLFESIVPKAIIGGWLDEDSFKERSDQNGGSENLRRFKKDAETIIQEYFLSDDIPELIRSLEDLGLPEYNPVFLKKLITLAMDRKNKEKEMASVFLASLHMEMFSTEDFINGFIMLLESAEDTALDILAASDELALFLARAVIDDVLAPLNLEEISNSLPPKSTGSETIRSARSLISARHAGERLLRSWGGGTGWAVEDAKDKIWKLLEEYEVGGVISEACRCIRDLGMPFFNHEVVKKALVMAMEKKNDRMLNLLQECFAEGIITTNQMTKGFGRVKDSLDDLSLDIPNAEEKFNSYVAHAEENGWLHRDFGCSTDS.

4 MI domains span residues 56-177 (DYKR…RAKK), 220-341 (ETKR…ERSD), 351-472 (RFKK…EISN), and 514-633 (DAKD…STDS). Residues 94–101 (VKRLVSMA) carry the Nuclear localization signal 1 motif. The Nuclear localization signal 2 signature appears at 389-396 (LKKLITLA).

Belongs to the PDCD4 family. Binds to EIF4A1. The association with ribosomes is modulated by cellular energy status and TOR activity. Mostly expressed, at low levels, in rosette leaves and flower buds, and, to a lower extent, in roots, stems, cauline leaves and flowers.

It localises to the nucleus. The protein resides in the cytoplasm. It is found in the cytosol. Its function is as follows. Involved in target of rapamycin (TOR)-regulated translation control, especially under energy-deficient conditions. This Arabidopsis thaliana (Mouse-ear cress) protein is MA3 DOMAIN-CONTAINING TRANSLATION REGULATORY FACTOR 4.